The following is a 347-amino-acid chain: N-acetyl-gamma-glutamyl-phosphate reductase (347 aa).

Cys-151 is an active-site residue.

Belongs to the NAGSA dehydrogenase family. Type 1 subfamily.

It localises to the cytoplasm. The catalysed reaction is N-acetyl-L-glutamate 5-semialdehyde + phosphate + NADP(+) = N-acetyl-L-glutamyl 5-phosphate + NADPH + H(+). It functions in the pathway amino-acid biosynthesis; L-arginine biosynthesis; N(2)-acetyl-L-ornithine from L-glutamate: step 3/4. Functionally, catalyzes the NADPH-dependent reduction of N-acetyl-5-glutamyl phosphate to yield N-acetyl-L-glutamate 5-semialdehyde. This Corynebacterium diphtheriae (strain ATCC 700971 / NCTC 13129 / Biotype gravis) protein is N-acetyl-gamma-glutamyl-phosphate reductase.